Consider the following 462-residue polypeptide: MRLLDSVTKEKIKLDKKDISIYLCGPTVYDDAHLGHARSSVCFDLLRRVLLAQGNRVKFARNYTDIDDKILKKMAQSGQTLEEITEFYIKSYEEDMRVLNVLDPDFKPRATHYITAMLDLIKKLAKDGFVYTLEDGIYFDTSKDEKYLSLSNRNLEENISRLSNEVQKRNESDFVLWKFDENFYESEFGKGRPGWHTECVAMIDSIFENTLDIHAGGIDLLFPHHENEAAQCRCGCKRKLANIWLHNGFVKIDGEKMSKSLNNSFFIKDALKEFMGEALRFYLLSSHYRSHFNYSLSDLENAKKRLDKFYRLKKRLDLGEISDFDVLNDIGIKSEIAKQILEILNDDLNVSKALALLDDFISSANLELDKESKNKILKQNIKEALSELAKIFGFGFMDATLYFQWGVSKEEREEIEKLILERTEAKKNKDFNTADAIREQLNSKKITLLDTPNGTIWEKINA.

Cysteine 24 serves as a coordination point for Zn(2+). Residues 26 to 36 (PTVYDDAHLGH) carry the 'HIGH' region motif. Residues cysteine 199, histidine 224, and glutamate 228 each contribute to the Zn(2+) site. Positions 256–260 (KMSKS) match the 'KMSKS' region motif. Position 259 (lysine 259) interacts with ATP.

The protein belongs to the class-I aminoacyl-tRNA synthetase family. As to quaternary structure, monomer. Zn(2+) serves as cofactor.

It is found in the cytoplasm. It catalyses the reaction tRNA(Cys) + L-cysteine + ATP = L-cysteinyl-tRNA(Cys) + AMP + diphosphate. This chain is Cysteine--tRNA ligase (cysS), found in Campylobacter jejuni subsp. jejuni serotype O:2 (strain ATCC 700819 / NCTC 11168).